The chain runs to 108 residues: Replication restart protein PriB (108 aa).

The region spanning 8–108 (IDNRFSVMGV…LHAEQIEFID (101 aa)) is the SSB domain.

Belongs to the PriB family. In terms of assembly, homodimer. Interacts with PriA and DnaT. Component of the replication restart primosome. Primosome assembly occurs via a 'hand-off' mechanism. PriA binds to replication forks, subsequently PriB then DnaT bind; DnaT then displaces ssDNA to generate the helicase loading substrate.

Functionally, involved in the restart of stalled replication forks, which reloads the replicative helicase on sites other than the origin of replication; the PriA-PriB pathway is the major replication restart pathway. During primosome assembly it facilitates complex formation between PriA and DnaT on DNA; stabilizes PriA on DNA. Stimulates the DNA unwinding activity of PriA helicase. This Haemophilus influenzae (strain 86-028NP) protein is Replication restart protein PriB.